Consider the following 218-residue polypeptide: Deoxyribose-phosphate aldolase (218 aa).

Asp-89 acts as the Proton donor/acceptor in catalysis. Residue Lys-152 is the Schiff-base intermediate with acetaldehyde of the active site. The active-site Proton donor/acceptor is Lys-182.

This sequence belongs to the DeoC/FbaB aldolase family. DeoC type 1 subfamily.

Its subcellular location is the cytoplasm. The enzyme catalyses 2-deoxy-D-ribose 5-phosphate = D-glyceraldehyde 3-phosphate + acetaldehyde. It functions in the pathway carbohydrate degradation; 2-deoxy-D-ribose 1-phosphate degradation; D-glyceraldehyde 3-phosphate and acetaldehyde from 2-deoxy-alpha-D-ribose 1-phosphate: step 2/2. Its function is as follows. Catalyzes a reversible aldol reaction between acetaldehyde and D-glyceraldehyde 3-phosphate to generate 2-deoxy-D-ribose 5-phosphate. This Kocuria rhizophila (strain ATCC 9341 / DSM 348 / NBRC 103217 / DC2201) protein is Deoxyribose-phosphate aldolase.